Here is a 32-residue protein sequence, read N- to C-terminus: MSDIN-like toxin proprotein 3 (32 aa).

Positions 1-10 (MSDINATRLP) are excised as a propeptide. Positions 11-17 (VWIGYSP) form a cross-link, cyclopeptide (Val-Pro). Residues 18–32 (CVGDDAVALLNRGEG) constitute a propeptide that is removed on maturation.

The protein belongs to the MSDIN fungal toxin family. Post-translationally, processed by the macrocyclase-peptidase enzyme POPB to yield a toxic cyclic heptapeptide. POPB first removes 10 residues from the N-terminus. Conformational trapping of the remaining peptide forces the enzyme to release this intermediate rather than proceed to macrocyclization. The enzyme rebinds the remaining peptide in a different conformation and catalyzes macrocyclization of the N-terminal 7 residues.

Its function is as follows. Probable toxin that belongs to the MSDIN-like toxin family responsible for a large number of food poisoning cases and deaths. The protein is MSDIN-like toxin proprotein 3 of Amanita fuligineoides.